The chain runs to 72 residues: MKNSESIKEFKKLNSSQITEKIDQLRKDLFDLRFKQATRQLNETHKFKIIKKQVAQLLTLSKSQSTSQKPAD.

The protein belongs to the universal ribosomal protein uL29 family.

In Prochlorococcus marinus subsp. pastoris (strain CCMP1986 / NIES-2087 / MED4), this protein is Large ribosomal subunit protein uL29.